The following is an 807-amino-acid chain: Glycerol-3-phosphate acyltransferase (807 aa).

The HXXXXD motif motif lies at 305 to 310; the sequence is CHRSHM.

It belongs to the GPAT/DAPAT family.

It localises to the cell inner membrane. The enzyme catalyses sn-glycerol 3-phosphate + an acyl-CoA = a 1-acyl-sn-glycero-3-phosphate + CoA. The protein operates within phospholipid metabolism; CDP-diacylglycerol biosynthesis; CDP-diacylglycerol from sn-glycerol 3-phosphate: step 1/3. This Klebsiella pneumoniae (strain 342) protein is Glycerol-3-phosphate acyltransferase.